A 329-amino-acid polypeptide reads, in one-letter code: Tyrosine recombinase XerC 1 (329 aa).

The Core-binding (CB) domain maps to 14-101; sequence APPHPQIGAY…AWRGWYQWLA (88 aa). A Tyr recombinase domain is found at 123 to 320; it reads RLPKALSVEQ…DFQHLAKIYD (198 aa). Catalysis depends on residues R163, K198, H272, R275, and H298. Y307 acts as the O-(3'-phospho-DNA)-tyrosine intermediate in catalysis.

It belongs to the 'phage' integrase family. XerC subfamily. In terms of assembly, forms a cyclic heterotetrameric complex composed of two molecules of XerC and two molecules of XerD.

It is found in the cytoplasm. In terms of biological role, site-specific tyrosine recombinase, which acts by catalyzing the cutting and rejoining of the recombining DNA molecules. The XerC-XerD complex is essential to convert dimers of the bacterial chromosome into monomers to permit their segregation at cell division. It also contributes to the segregational stability of plasmids. The chain is Tyrosine recombinase XerC 1 (xerC1) from Ralstonia nicotianae (strain ATCC BAA-1114 / GMI1000) (Ralstonia solanacearum).